A 342-amino-acid polypeptide reads, in one-letter code: 11-beta-hydroxysteroid dehydrogenase-like 6 (342 aa).

The helical; Signal-anchor for type II membrane protein transmembrane segment at 10-30 (FLFPLLTLYALLVFYPTYQRL) threads the bilayer. NADP(+) is bound by residues 54 to 80 (GAASGIGEALAYEYGKRGAYLALVDIR) and Asp-105. Ser-184 contacts substrate. Tyr-197 functions as the Proton acceptor in the catalytic mechanism. Residues 197-201 (YCASK) and Lys-201 contribute to the NADP(+) site.

This sequence belongs to the short-chain dehydrogenases/reductases (SDR) family.

Its subcellular location is the membrane. The sequence is that of 11-beta-hydroxysteroid dehydrogenase-like 6 (HSD6) from Arabidopsis thaliana (Mouse-ear cress).